A 435-amino-acid polypeptide reads, in one-letter code: Legumain (435 aa).

The N-terminal stretch at 1 to 17 (MTWRVAVLLSLVLGAGA) is a signal peptide. A glycan (N-linked (GlcNAc...) asparagine) is linked at Asn-93. Residue His-150 is part of the active site. Residue Asn-169 is glycosylated (N-linked (GlcNAc...) asparagine). Cys-191 serves as the catalytic Nucleophile. Asn-265 and Asn-274 each carry an N-linked (GlcNAc...) asparagine glycan. Positions 326–435 (DVKESQNLIG…AMDKVCLSHY (110 aa)) are excised as a propeptide. Cystine bridges form between Cys-380-Cys-414 and Cys-392-Cys-431.

Belongs to the peptidase C13 family. As to quaternary structure, homodimer before autocatalytic removal of the propeptide. Monomer after autocatalytic processing. May interact with integrins. Post-translationally, glycosylated. In terms of processing, activated by autocatalytic processing at pH 4. In terms of tissue distribution, detected in kidney proximal tubules (at protein level). Ubiquitous. Particularly abundant in kidney and placenta.

Its subcellular location is the lysosome. It carries out the reaction Hydrolysis of proteins and small molecule substrates at -Asn-|-Xaa- bonds.. Its activity is regulated as follows. Inhibited by cystatin-C. Its function is as follows. Has a strict specificity for hydrolysis of asparaginyl bonds. Can also cleave aspartyl bonds slowly, especially under acidic conditions. Involved in the processing of proteins for MHC class II antigen presentation in the lysosomal/endosomal system. Also involved in MHC class I antigen presentation in cross-presenting dendritic cells by mediating cleavage and maturation of Perforin-2 (MPEG1), thereby promoting antigen translocation in the cytosol. Required for normal lysosomal protein degradation in renal proximal tubules. Required for normal degradation of internalized EGFR. Plays a role in the regulation of cell proliferation via its role in EGFR degradation. This chain is Legumain (Lgmn), found in Mus musculus (Mouse).